The sequence spans 212 residues: Large ribosomal subunit protein mL48 (212 aa).

Residues 1–28 constitute a mitochondrion transit peptide; it reads MNGALGKVLCLKNDTIFKQAFSLLRFRT. Position 199 is an N6-succinyllysine (K199).

This sequence belongs to the mitochondrion-specific ribosomal protein mL48 family. In terms of assembly, component of the mitochondrial ribosome large subunit (39S) which comprises a 16S rRNA and about 50 distinct proteins. Interacts with OXA1L.

It is found in the mitochondrion. The protein is Large ribosomal subunit protein mL48 (MRPL48) of Bos taurus (Bovine).